Here is a 2904-residue protein sequence, read N- to C-terminus: Highly reducing polyketide synthase bet1 (2904 aa).

Residues N8–S441 enclose the Ketosynthase family 3 (KS3) domain. Catalysis depends on for beta-ketoacyl synthase activity residues C181, H320, and H361. The acyl transferase (AT) domain stretch occupies residues V553 to G875. An N-terminal hotdog fold region spans residues H948–E1081. The 310-residue stretch at H948–N1257 folds into the PKS/mFAS DH domain. Residues P971–A1255 form a dehydratase (DH) domain region. Residue H980 is the Proton acceptor; for dehydratase activity of the active site. Residues M1098–N1257 form a C-terminal hotdog fold region. D1159 acts as the Proton donor; for dehydratase activity in catalysis. The methyltransferase (cMeT) domain stretch occupies residues K1411–P1596. Positions T2125 to I2298 are ketoreductase (KR)domain. The Carrier domain occupies E2407–I2486. S2445 carries the O-(pantetheine 4'-phosphoryl)serine modification. The segment at P2492–V2543 is disordered. A compositionally biased stretch (polar residues) spans A2497–V2523. Residues T2524–S2541 are compositionally biased toward low complexity. A reductase (R) domain region spans residues L2585 to E2817.

Pantetheine 4'-phosphate is required as a cofactor.

The catalysed reaction is 7 malonyl-CoA + acetyl-CoA + 10 AH2 + 5 S-adenosyl-L-methionine + 2 H(+) = dehydroprobetaenone I + 10 A + 5 S-adenosyl-L-homocysteine + 7 CO2 + 8 CoA + 6 H2O. The protein operates within mycotoxin biosynthesis. Highly reducing polyketide synthase; part of the gene cluster that mediates the biosynthesis of betaenones, phytotoxic polyketides involved in leaf spot disease in sugar beets. The first step of the pathway is the synthesis of dehydroprobetaenone I by the polyketide synthase bet1 and the enoyl reductase bet3 via condensation of one acetyl-CoA starter unit with 7 malonyl-CoA units and 5 methylations. The C-terminal reductase (R) domain of bet1 catalyzes the reductive release of the polyketide chain. Because bet1 lacks a designated enoylreductase (ER) domain, the required activity is provided the enoyl reductase bet3. The short-chain dehydrogenase/reductase bet4 then catalyzes reduction of dehydroprobetaenone I to probetaenone I. The cytochrome P450 monooxygenase bet2 catalyzes successive epoxidation, oxidation (resulting from epoxide opening) and hydroxylation to install a tertiary alcohol in the decaline ring to yield betaenone C from dehydroprobetaenone I and betaenone B from probetaenone I. The FAD-linked oxidoreductase (orf1) is probably responsible for the conversion of betaenone C to betaenone A via an intramolecular aldol reaction between C-1 and C-17 to form the bridged tricyclic system in betaenone A. This Neocamarosporium betae (Beet black rot fungus) protein is Highly reducing polyketide synthase bet1.